The primary structure comprises 249 residues: tRNA pseudouridine synthase A (249 aa).

Catalysis depends on D52, which acts as the Nucleophile. Y110 is a substrate binding site.

Belongs to the tRNA pseudouridine synthase TruA family. Homodimer.

It carries out the reaction uridine(38/39/40) in tRNA = pseudouridine(38/39/40) in tRNA. Its function is as follows. Formation of pseudouridine at positions 38, 39 and 40 in the anticodon stem and loop of transfer RNAs. In Exiguobacterium sibiricum (strain DSM 17290 / CCUG 55495 / CIP 109462 / JCM 13490 / 255-15), this protein is tRNA pseudouridine synthase A.